The primary structure comprises 57 residues: Large ribosomal subunit protein bL32c (57 aa).

As to quaternary structure, component of the chloroplast large ribosomal subunit (LSU). Mature 70S chloroplast ribosomes of higher plants consist of a small (30S) and a large (50S) subunit. The 30S small subunit contains 1 molecule of ribosomal RNA (16S rRNA) and 24 different proteins. The 50S large subunit contains 3 rRNA molecules (23S, 5S and 4.5S rRNA) and 33 different proteins.

It localises to the plastid. The protein resides in the chloroplast. In terms of biological role, component of the chloroplast ribosome (chloro-ribosome), a dedicated translation machinery responsible for the synthesis of chloroplast genome-encoded proteins, including proteins of the transcription and translation machinery and components of the photosynthetic apparatus. The polypeptide is Large ribosomal subunit protein bL32c (rpl32) (Spinacia oleracea (Spinach)).